The following is a 494-amino-acid chain: 4-trimethylaminobutyraldehyde dehydrogenase (494 aa).

An N-acetylserine modification is found at S2. K30 is modified (N6-acetyllysine; alternate). N6-succinyllysine; alternate is present on K30. Position 59 is an N6-succinyllysine (K59). NAD(+)-binding positions include K180 and 232–236 (GSVPT). E254 serves as the catalytic Proton acceptor. C288 acts as the Nucleophile in catalysis. K298 is subject to N6-acetyllysine. At K303 the chain carries N6-acetyllysine; alternate. At K303 the chain carries N6-succinyllysine; alternate. K344 is subject to N6-acetyllysine. An NAD(+)-binding site is contributed by E391.

Belongs to the aldehyde dehydrogenase family. In terms of assembly, homotetramer.

It localises to the cytoplasm. The protein localises to the cytosol. It carries out the reaction 4-(trimethylamino)butanal + NAD(+) + H2O = 4-(trimethylamino)butanoate + NADH + 2 H(+). The enzyme catalyses an aldehyde + NAD(+) + H2O = a carboxylate + NADH + 2 H(+). It catalyses the reaction 4-aminobutanal + NAD(+) + H2O = 4-aminobutanoate + NADH + 2 H(+). The catalysed reaction is formaldehyde + NAD(+) + H2O = formate + NADH + 2 H(+). It carries out the reaction acetaldehyde + NAD(+) + H2O = acetate + NADH + 2 H(+). The enzyme catalyses imidazole-4-acetaldehyde + NAD(+) + H2O = imidazole-4-acetate + NADH + 2 H(+). It catalyses the reaction acrolein + NAD(+) + H2O = acrylate + NADH + 2 H(+). The catalysed reaction is (5-hydroxyindol-3-yl)acetaldehyde + NAD(+) + H2O = (5-hydroxyindol-3-yl)acetate + NADH + 2 H(+). It carries out the reaction 3,4-dihydroxyphenylacetaldehyde + NAD(+) + H2O = 3,4-dihydroxyphenylacetate + NADH + 2 H(+). The enzyme catalyses spermine monoaldehyde + NAD(+) + H2O = N-(2-carboxyethyl)spermidine + NADH + 2 H(+). It catalyses the reaction propanal + NAD(+) + H2O = propanoate + NADH + 2 H(+). The catalysed reaction is butanal + NAD(+) + H2O = butanoate + NADH + 2 H(+). It carries out the reaction pentanal + NAD(+) + H2O = pentanoate + NADH + 2 H(+). The enzyme catalyses hexanal + NAD(+) + H2O = hexanoate + NADH + 2 H(+). The protein operates within amine and polyamine biosynthesis; carnitine biosynthesis. Functionally, converts gamma-trimethylaminobutyraldehyde into gamma-butyrobetaine with high efficiency (in vitro). Can catalyze the irreversible oxidation of a broad range of aldehydes to the corresponding acids in an NAD-dependent reaction, but with low efficiency. Catalyzes the oxidation of aldehydes arising from biogenic amines and polyamines. The protein is 4-trimethylaminobutyraldehyde dehydrogenase of Mus musculus (Mouse).